We begin with the raw amino-acid sequence, 226 residues long: Exosome complex component rrp46 (226 aa).

Residues 205-226 form a disordered region; it reads NESDGHENEKNPKEDVEMDVVA. Residues 207 to 219 show a composition bias toward basic and acidic residues; it reads SDGHENEKNPKED.

This sequence belongs to the RNase PH family. In terms of assembly, component of the RNA exosome complex. Specifically part of the catalytically inactive RNA exosome core complex (Exo-9) which may associate with the catalytic subunits rrp6 and dis3 in cytoplasmic- and nuclear-specific RNA exosome complex forms. Exo-9 is formed by a hexameric base ring of RNase PH domain-containing subunits and a cap ring consisting of csl4, rrp4 and rrp40.

Its subcellular location is the cytoplasm. It is found in the nucleus. The protein resides in the nucleolus. In terms of biological role, non-catalytic component of the RNA exosome complex which has 3'-&gt;5' exoribonuclease activity and participates in a multitude of cellular RNA processing and degradation events. In the nucleus, the RNA exosome complex is involved in proper maturation of stable RNA species such as rRNA, snRNA and snoRNA, in the elimination of RNA processing by-products and non-coding 'pervasive' transcripts, such as antisense RNA species and cryptic unstable transcripts (CUTs), and of mRNAs with processing defects, thereby limiting or excluding their export to the cytoplasm. In the cytoplasm, the RNA exosome complex is involved in general mRNA turnover and in RNA surveillance pathways, preventing translation of aberrant mRNAs. The catalytic inactive RNA exosome core complex of 9 subunits (Exo-9) is proposed to play a pivotal role in the binding and presentation of RNA for ribonucleolysis, and to serve as a scaffold for the association with catalytic subunits and accessory proteins or complexes. ski6 is part of the hexameric ring of RNase PH domain-containing subunits proposed to form a central channel which threads RNA substrates for degradation. This chain is Exosome complex component rrp46 (rrp46), found in Schizosaccharomyces pombe (strain 972 / ATCC 24843) (Fission yeast).